The chain runs to 122 residues: NADH-quinone oxidoreductase subunit A (122 aa).

3 helical membrane passes run 10 to 30, 66 to 86, and 91 to 111; these read MIVG…LTLG, IFAL…PWAV, and LGLF…IGLA.

The protein belongs to the complex I subunit 3 family. In terms of assembly, NDH-1 is composed of 14 different subunits. Subunits NuoA, H, J, K, L, M, N constitute the membrane sector of the complex.

The protein localises to the cell membrane. It carries out the reaction a quinone + NADH + 5 H(+)(in) = a quinol + NAD(+) + 4 H(+)(out). Functionally, NDH-1 shuttles electrons from NADH, via FMN and iron-sulfur (Fe-S) centers, to quinones in the respiratory chain. The immediate electron acceptor for the enzyme in this species is believed to be a menaquinone. Couples the redox reaction to proton translocation (for every two electrons transferred, four hydrogen ions are translocated across the cytoplasmic membrane), and thus conserves the redox energy in a proton gradient. The sequence is that of NADH-quinone oxidoreductase subunit A from Bacillus cytotoxicus (strain DSM 22905 / CIP 110041 / 391-98 / NVH 391-98).